The primary structure comprises 840 residues: Translation initiation factor IF-2 (840 aa).

Over residues 95–143 (RSPDEIEAERQRELEEQRAAEEAERLKAEEAAARQRAEEEARKAEEAAR) the composition is skewed to basic and acidic residues. Disordered regions lie at residues 95-155 (RSPD…ATAG) and 172-256 (KPAA…PTGP). Over residues 144–155 (AKAAQEAAATAG) the composition is skewed to low complexity. Composition is skewed to basic and acidic residues over residues 175–191 (AVEERKKEEPRRAPKRD) and 223–232 (STDEESDGYR). The span at 233 to 247 (RGGRGGKSKLKKRNQ) shows a compositional bias: basic residues. In terms of domain architecture, tr-type G spans 340–509 (TRAPVVTVMG…LLQAEVLELK (170 aa)). The segment at 349-356 (GHVDHGKT) is G1. 349–356 (GHVDHGKT) lines the GTP pocket. Positions 374–378 (GITQH) are G2. Residues 395 to 398 (DTPG) form a G3 region. GTP is bound by residues 395–399 (DTPGH) and 449–452 (NKID). The G4 stretch occupies residues 449–452 (NKID). The interval 485-487 (SAK) is G5.

This sequence belongs to the TRAFAC class translation factor GTPase superfamily. Classic translation factor GTPase family. IF-2 subfamily.

It localises to the cytoplasm. One of the essential components for the initiation of protein synthesis. Protects formylmethionyl-tRNA from spontaneous hydrolysis and promotes its binding to the 30S ribosomal subunits. Also involved in the hydrolysis of GTP during the formation of the 70S ribosomal complex. The sequence is that of Translation initiation factor IF-2 from Pseudomonas aeruginosa (strain LESB58).